A 191-amino-acid chain; its full sequence is Pyridoxal 5'-phosphate synthase subunit PdxT (191 aa).

48–50 (GES) lines the L-glutamine pocket. The active-site Nucleophile is the cysteine 79. Residues arginine 106 and 134-135 (IR) contribute to the L-glutamine site. Active-site charge relay system residues include histidine 170 and glutamate 172.

Belongs to the glutaminase PdxT/SNO family. In the presence of PdxS, forms a dodecamer of heterodimers. Only shows activity in the heterodimer.

It carries out the reaction aldehydo-D-ribose 5-phosphate + D-glyceraldehyde 3-phosphate + L-glutamine = pyridoxal 5'-phosphate + L-glutamate + phosphate + 3 H2O + H(+). It catalyses the reaction L-glutamine + H2O = L-glutamate + NH4(+). It participates in cofactor biosynthesis; pyridoxal 5'-phosphate biosynthesis. Catalyzes the hydrolysis of glutamine to glutamate and ammonia as part of the biosynthesis of pyridoxal 5'-phosphate. The resulting ammonia molecule is channeled to the active site of PdxS. This is Pyridoxal 5'-phosphate synthase subunit PdxT from Oenococcus oeni (strain ATCC BAA-331 / PSU-1).